Reading from the N-terminus, the 410-residue chain is Protein CNPPD1 (410 aa).

Residues 233–253 form a helical membrane-spanning segment; sequence CLLAVAYVSSVALAVASVAVI.

It belongs to the CNPPD1 family.

The protein localises to the membrane. This Pongo abelii (Sumatran orangutan) protein is Protein CNPPD1 (CNPPD1).